An 83-amino-acid polypeptide reads, in one-letter code: Translational regulator CsrA (83 aa).

Belongs to the CsrA/RsmA family. In terms of assembly, homodimer; the beta-strands of each monomer intercalate to form a hydrophobic core, while the alpha-helices form wings that extend away from the core.

It localises to the cytoplasm. Functionally, a translational regulator that binds mRNA to regulate translation initiation and/or mRNA stability. Usually binds in the 5'-UTR at or near the Shine-Dalgarno sequence preventing ribosome-binding, thus repressing translation. Its main target seems to be the major flagellin gene, while its function is anatagonized by FliW. In Nocardioides sp. (strain ATCC BAA-499 / JS614), this protein is Translational regulator CsrA.